A 532-amino-acid polypeptide reads, in one-letter code: Probable bifunctional tRNA threonylcarbamoyladenosine biosynthesis protein (532 aa).

A kae1 region spans residues Met1 to Trp323. 2 residues coordinate Fe cation: His107 and His111. L-threonylcarbamoyladenylate contacts are provided by residues Asn128–Ala132, Asp160, Gly173, Glu177, and Asn256. Fe cation is bound at residue Asp284. One can recognise a Protein kinase domain in the interval Pro329–Ala532. ATP is bound by residues Val338–Val346 and Lys355. Asp444 functions as the Proton acceptor; for kinase activity in the catalytic mechanism.

In the N-terminal section; belongs to the KAE1 / TsaD family. It in the C-terminal section; belongs to the protein kinase superfamily. Tyr protein kinase family. BUD32 subfamily. As to quaternary structure, component of the KEOPS complex that consists of Kae1, Bud32, Cgi121 and Pcc1; the whole complex dimerizes. It depends on Fe(2+) as a cofactor.

The protein localises to the cytoplasm. The enzyme catalyses L-seryl-[protein] + ATP = O-phospho-L-seryl-[protein] + ADP + H(+). It catalyses the reaction L-threonyl-[protein] + ATP = O-phospho-L-threonyl-[protein] + ADP + H(+). It carries out the reaction L-threonylcarbamoyladenylate + adenosine(37) in tRNA = N(6)-L-threonylcarbamoyladenosine(37) in tRNA + AMP + H(+). Functionally, required for the formation of a threonylcarbamoyl group on adenosine at position 37 (t(6)A37) in tRNAs that read codons beginning with adenine. Is a component of the KEOPS complex that is probably involved in the transfer of the threonylcarbamoyl moiety of threonylcarbamoyl-AMP (TC-AMP) to the N6 group of A37. The Kae1 domain likely plays a direct catalytic role in this reaction. The Bud32 domain probably displays kinase activity that regulates Kae1 function. This chain is Probable bifunctional tRNA threonylcarbamoyladenosine biosynthesis protein, found in Halobacterium salinarum (strain ATCC 700922 / JCM 11081 / NRC-1) (Halobacterium halobium).